Here is a 1116-residue protein sequence, read N- to C-terminus: MRFFLTFLLFLFTLFSLFVYDFLRKKNFYLDLDLDIRTRTVKELILNLERFFGLNLYLNFKDIKFEKIIKIEKGKVVVVSFKKRKKKKKFLLKNIPIREIPINLKIGHLDVWTGNEGGVNRVIVKDASLINNELEGEFLYTNLRSFTLNGSIKAKIQRDTLTLKDLLLDSEYFSAKTKGEIKRNTGEILAEVEIKEIRKENFTLSGTKINAKGTINLPVLDINAKAFVKDLIVRNKNYGSIEGIVKGNYELFDKLFLKGEAVNPEGTKIKFTYDVIPEGLLTFSFENLVVDKNTLGINREIRGEFHGNGKVDFKKMFVKVNAFTENLEVIDKKFKGDVLFSYNFSGNGSLNFEFKNSGYAKGNLIINKNKLEGEFSFNDFPVVFQDFNAYLSGEGKFKKGKIFEMEAKIFANNGQFRDFSLQRISSDVKIRDKEIEALVYYGNSFGFVKGKFDNLKGFIQLNNFSLEGKEKSIKISHGSIEFSIQGKSINSKGKLGDLALNLSNIYAKTELEFNFNKKNEKITLEGNGILNVRFKEKSVLENFKYSLLLLDNNLRIFGASKDSILRVVYYISGRSGEFYGKIDKKEFGISLNGEIKNKDVKANFEAFYALLREKIKIKGKIETKEDQVKISLFPTQLRGKRFNYRFNGLNVFLEKENLSVEFKGLDVSLLDKKLLSISPSKGVGTTKNFSFEPVKITGVLNGVLNIAYKGNLYLKSSGTLNLTLLSKHIGSLMKSQMFGKLDYEFVFDGNELKFLARNDEPVRINSLYFYEPFGSAMNLELRKDFFAFALTGWFREGFLNAYAISKNFRDFEVEFVYKNLPVKLKDGIRARIEADGKGKVVVKNFKEIFLTLDTLLDGYVKVKKLPEKKEEEKKTLPVEITLDINFKTENGLIVKLPEGRVYTALNGRIYGKLPEPYYEIDVVLKSGRLEYFGRKFFVKRSTVKLLKEKDKELTEFDFYLNTVSDGYKIFLLVHGTPENPSVYYFSEPPLSREQILFKLISGGVNEGILPVGTVLANELKALGYVKGTIERLFDVNVEIGIKTSSTGEVGALVKLKKKLGSYFSLYYQTASTKDKKDTFWGAEVRSPGSLDLGFSFNVYSDNTREYKLRYVREFDF.

A helical membrane pass occupies residues 3-20; sequence FFLTFLLFLFTLFSLFVY.

The protein localises to the membrane. This is an uncharacterized protein from Aquifex aeolicus (strain VF5).